A 206-amino-acid chain; its full sequence is Probable GTP-binding protein EngB (206 aa).

An EngB-type G domain is found at 23 to 195; it reads DLLEIAFVGR…WARIEAIMAE (173 aa). GTP-binding positions include 31–38, 58–62, 76–79, 143–146, and 174–176; these read GRSNVGKS, GRTQL, DLPG, TKCD, and FSA. S38 and T60 together coordinate Mg(2+).

It belongs to the TRAFAC class TrmE-Era-EngA-EngB-Septin-like GTPase superfamily. EngB GTPase family. Mg(2+) serves as cofactor.

Necessary for normal cell division and for the maintenance of normal septation. This is Probable GTP-binding protein EngB from Geobacter sulfurreducens (strain ATCC 51573 / DSM 12127 / PCA).